A 160-amino-acid polypeptide reads, in one-letter code: Non-secretory ribonuclease (160 aa).

The N-terminal stretch at 1–27 (MVPKLFTSPICLLLLLGLMGVEGSLHA) is a signal peptide. Tryptophan 34 carries a C-linked (Man) tryptophan glycan. Residue histidine 42 is the Proton acceptor of the active site. The N-linked (GlcNAc...) asparagine glycan is linked to asparagine 44. 4 cysteine pairs are disulfide-bonded: cysteine 50/cysteine 110, cysteine 64/cysteine 122, cysteine 82/cysteine 137, and cysteine 89/cysteine 98. Tyrosine 60 carries the post-translational modification 3'-nitrotyrosine. 65–69 (KNQNT) contacts substrate. N-linked (GlcNAc...) asparagine glycans are attached at residues asparagine 92, asparagine 111, and asparagine 138. The Proton donor role is filled by histidine 155.

Belongs to the pancreatic ribonuclease family. Interacts with and forms a tight 1:1 complex with RNH1. Dimerization of two such complexes may occur.

Its subcellular location is the lysosome. It localises to the cytoplasmic granule. It catalyses the reaction an [RNA] containing cytidine + H2O = an [RNA]-3'-cytidine-3'-phosphate + a 5'-hydroxy-ribonucleotide-3'-[RNA].. The enzyme catalyses an [RNA] containing uridine + H2O = an [RNA]-3'-uridine-3'-phosphate + a 5'-hydroxy-ribonucleotide-3'-[RNA].. Functionally, this is a non-secretory ribonuclease. It is a pyrimidine specific nuclease with a slight preference for U. Cytotoxin and helminthotoxin. Possesses a wide variety of biological activities. In Macaca nemestrina (Pig-tailed macaque), this protein is Non-secretory ribonuclease (RNASE2).